A 264-amino-acid polypeptide reads, in one-letter code: S-adenosylmethionine decarboxylase proenzyme (264 aa).

The Schiff-base intermediate with substrate; via pyruvic acid role is filled by Ser-113. Residue Ser-113 is modified to Pyruvic acid (Ser); by autocatalysis. The Proton acceptor; for processing activity role is filled by His-118. The active-site Proton donor; for catalytic activity is Cys-141.

It belongs to the prokaryotic AdoMetDC family. Type 2 subfamily. Heterooctamer of four alpha and four beta chains arranged as a tetramer of alpha/beta heterodimers. Pyruvate is required as a cofactor. In terms of processing, is synthesized initially as an inactive proenzyme. Formation of the active enzyme involves a self-maturation process in which the active site pyruvoyl group is generated from an internal serine residue via an autocatalytic post-translational modification. Two non-identical subunits are generated from the proenzyme in this reaction, and the pyruvate is formed at the N-terminus of the alpha chain, which is derived from the carboxyl end of the proenzyme. The post-translation cleavage follows an unusual pathway, termed non-hydrolytic serinolysis, in which the side chain hydroxyl group of the serine supplies its oxygen atom to form the C-terminus of the beta chain, while the remainder of the serine residue undergoes an oxidative deamination to produce ammonia and the pyruvoyl group blocking the N-terminus of the alpha chain.

It carries out the reaction S-adenosyl-L-methionine + H(+) = S-adenosyl 3-(methylsulfanyl)propylamine + CO2. Its pathway is amine and polyamine biosynthesis; S-adenosylmethioninamine biosynthesis; S-adenosylmethioninamine from S-adenosyl-L-methionine: step 1/1. Catalyzes the decarboxylation of S-adenosylmethionine to S-adenosylmethioninamine (dcAdoMet), the propylamine donor required for the synthesis of the polyamines spermine and spermidine from the diamine putrescine. This Pseudomonas syringae pv. tomato (strain ATCC BAA-871 / DC3000) protein is S-adenosylmethionine decarboxylase proenzyme.